We begin with the raw amino-acid sequence, 1064 residues long: Lethal(2) giant larvae protein homolog 1 (1064 aa).

WD repeat units lie at residues 38 to 71, 78 to 119, 139 to 176, 200 to 234, 240 to 272, 290 to 332, 340 to 374, 396 to 474, 518 to 593, 602 to 663, 723 to 783, 792 to 844, 849 to 902, and 916 to 939; these read SALA…FTGL, VTQM…ALSF, VTVV…GQTL, SLQG…DHIF, LESL…GSFP, AINK…ETLV, IIDF…VLDL, TCSA…YKLS, QKVA…RVLV, TAVT…LRQS, VRCL…KEVQ, AIAV…VSAK, LTAH…VHYS, and VFTR…SLSA. Position 663 is a phosphoserine (Ser663). At Thr958 the chain carries Phosphothreonine. Residues 966–1010 form a disordered region; the sequence is ESPKLSQANGTPSILLAPQSLDGSPDPAHSMGPDTPEPPEAALSP. Phosphoserine occurs at positions 967 and 985.

It belongs to the WD repeat L(2)GL family. As to quaternary structure, associated with nonmuscle myosin II heavy chain. Interacts with PRKCI/aPKC, PARD6B/Par-6 and PARD6A. Interacts with STX4A. Interacts with RAB10 (GDP-bound form); the interaction is direct and promotes RAB10 association with membranes and activation through competition with the Rab inhibitor GDI1. Interacts with DCAF1. Phosphorylated at least at Ser-663 by PRKCI. In terms of tissue distribution, expressed in brain, kidney, and muscle but is barely seen in heart and placenta. Down-regulated or lost in all cell lines and in most of the tumor samples analyzed. Loss was associated with advanced stage of the disease.

It is found in the early endosome membrane. The protein resides in the golgi apparatus. Its subcellular location is the trans-Golgi network membrane. It localises to the golgi apparatus membrane. The protein localises to the cell projection. It is found in the axon. The protein resides in the cytoplasm. Its subcellular location is the cytoskeleton. In terms of biological role, cortical cytoskeleton protein found in a complex involved in maintaining cell polarity and epithelial integrity. Involved in the regulation of mitotic spindle orientation, proliferation, differentiation and tissue organization of neuroepithelial cells. Involved in axonogenesis through RAB10 activation thereby regulating vesicular membrane trafficking toward the axonal plasma membrane. The sequence is that of Lethal(2) giant larvae protein homolog 1 (LLGL1) from Homo sapiens (Human).